A 1657-amino-acid polypeptide reads, in one-letter code: Alsin (1657 aa).

RCC1 repeat units lie at residues 59–108 (DGEV…AVTD), 109–167 (NGVA…ALSI), and 169–218 (REIW…ALVQ). Positions 432–480 (TGAQAGSSAIGPEGLKDSREEQVKQESMQGKKSSSLVDIREEETEGGSR) are disordered. Over residues 445-455 (GLKDSREEQVK) the composition is skewed to basic and acidic residues. The segment covering 456 to 467 (QESMQGKKSSSL) has biased composition (polar residues). Phosphoserine occurs at positions 465, 466, 483, and 492. The residue at position 510 (T510) is a Phosphothreonine. 2 RCC1 repeats span residues 525-576 (RTEV…ALTA) and 578-627 (SQVY…FLVD). At K533 the chain carries N6-acetyllysine. The region spanning 690-885 (GYIASLHELA…ECLALHLGRK (196 aa)) is the DH domain. The PH domain maps to 901 to 1007 (GKMTDSLRKP…RAISQAVDQA (107 aa)). MORN repeat units follow at residues 1049–1071 (YDGR…DGKM), 1072–1094 (YSGM…NKAM), 1100–1122 (YVGH…SGEV), 1123–1145 (FEGC…KLTS), 1151–1173 (FIGQ…TRGE), 1175–1197 (YMGM…FGLY), 1198–1220 (YEGN…DDTI), and 1221–1244 (YEGE…NGDY). Residue S1335 is modified to Phosphoserine. Residues 1513 to 1657 (KQPDIALLGF…YYQIQREKLN (145 aa)) enclose the VPS9 domain.

In terms of assembly, forms a heteromeric complex with ALS2CL. Interacts with ALS2CL.

Its function is as follows. May act as a GTPase regulator. Controls survival and growth of spinal motoneurons. This Homo sapiens (Human) protein is Alsin (ALS2).